Consider the following 138-residue polypeptide: Thyrotropin subunit beta (138 aa).

The signal sequence occupies residues 1-20 (MNAVVLFSVLFALACGQVSS). Intrachain disulfides connect Cys22-Cys72, Cys36-Cys87, Cys39-Cys125, Cys47-Cys103, Cys51-Cys105, and Cys108-Cys115. An N-linked (GlcNAc...) asparagine glycan is attached at Asn43. Positions 133–138 (LGGFSG) are excised as a propeptide.

The protein belongs to the glycoprotein hormones subunit beta family. As to quaternary structure, heterodimer of a common alpha chain and a unique beta chain which confers biological specificity to thyrotropin, lutropin, follitropin and gonadotropin.

The protein resides in the secreted. Functionally, indispensable for the control of thyroid structure and metabolism. This chain is Thyrotropin subunit beta (Tshb), found in Rattus norvegicus (Rat).